The sequence spans 317 residues: Adenine deaminase (317 aa).

Zn(2+) is bound by residues histidine 14, histidine 16, and histidine 194. Glutamate 197 functions as the Proton donor in the catalytic mechanism. Aspartate 275 contributes to the Zn(2+) binding site. Residue aspartate 276 participates in substrate binding.

It belongs to the metallo-dependent hydrolases superfamily. Adenosine and AMP deaminases family. Adenine deaminase type 2 subfamily. Zn(2+) is required as a cofactor.

The enzyme catalyses adenine + H2O + H(+) = hypoxanthine + NH4(+). Its function is as follows. Catalyzes the hydrolytic deamination of adenine to hypoxanthine. Plays an important role in the purine salvage pathway and in nitrogen catabolism. The polypeptide is Adenine deaminase (Pseudomonas syringae pv. tomato (strain ATCC BAA-871 / DC3000)).